The primary structure comprises 40 residues: Photosystem II reaction center protein J (40 aa).

A helical membrane pass occupies residues 8–28 (IPLWIVGTVTGILVIGLIGVF).

It belongs to the PsbJ family. As to quaternary structure, PSII is composed of 1 copy each of membrane proteins PsbA, PsbB, PsbC, PsbD, PsbE, PsbF, PsbH, PsbI, PsbJ, PsbK, PsbL, PsbM, PsbT, PsbX, PsbY, PsbZ, Psb30/Ycf12, at least 3 peripheral proteins of the oxygen-evolving complex and a large number of cofactors. It forms dimeric complexes.

The protein resides in the plastid. The protein localises to the chloroplast thylakoid membrane. Functionally, one of the components of the core complex of photosystem II (PSII). PSII is a light-driven water:plastoquinone oxidoreductase that uses light energy to abstract electrons from H(2)O, generating O(2) and a proton gradient subsequently used for ATP formation. It consists of a core antenna complex that captures photons, and an electron transfer chain that converts photonic excitation into a charge separation. This chain is Photosystem II reaction center protein J, found in Coffea arabica (Arabian coffee).